A 121-amino-acid polypeptide reads, in one-letter code: Ribosome-binding factor A (121 aa).

It belongs to the RbfA family. As to quaternary structure, monomer. Binds 30S ribosomal subunits, but not 50S ribosomal subunits or 70S ribosomes.

The protein localises to the cytoplasm. Its function is as follows. One of several proteins that assist in the late maturation steps of the functional core of the 30S ribosomal subunit. Associates with free 30S ribosomal subunits (but not with 30S subunits that are part of 70S ribosomes or polysomes). Required for efficient processing of 16S rRNA. May interact with the 5'-terminal helix region of 16S rRNA. This Paraburkholderia xenovorans (strain LB400) protein is Ribosome-binding factor A.